The primary structure comprises 59 residues: Large ribosomal subunit protein bL32 (59 aa).

A disordered region spans residues 1–59 (MAVQQNKKSPSKRGMHRSHDFLTTAPIAVEPTTGEVHLRHHVSPNGYYRGRKVVKTKND). Over residues 49-59 (RGRKVVKTKND) the composition is skewed to basic residues.

Belongs to the bacterial ribosomal protein bL32 family.

This Ralstonia pickettii (strain 12J) protein is Large ribosomal subunit protein bL32.